The following is a 473-amino-acid chain: Transposase for insertion sequence element IS1151 (473 aa).

Belongs to the transposase 11 family.

Functionally, involved in the transposition of the insertion sequence. This Clostridium perfringens protein is Transposase for insertion sequence element IS1151 (tnp).